A 394-amino-acid chain; its full sequence is Mitogen-activated protein kinase 2 (394 aa).

A compositionally biased stretch (polar residues) spans 1 to 10 (MDGPAQQTDT). Residues 1 to 27 (MDGPAQQTDTVMAEAAAAQQPAPPSQP) are disordered. The Protein kinase domain maps to 61 to 346 (KPPIMPIGKG…VEDALAHPYL (286 aa)). ATP-binding positions include 67-75 (IGKGAYGIV) and K90. Catalysis depends on D187, which acts as the Proton acceptor. Residue T219 is modified to Phosphothreonine. The TXY motif lies at 219 to 221 (TEY). The residue at position 221 (Y221) is a Phosphotyrosine. Position 224 is a phosphothreonine (T224).

It belongs to the protein kinase superfamily. CMGC Ser/Thr protein kinase family. MAP kinase subfamily. Requires Mg(2+) as cofactor. In terms of processing, activated by cold, wounding and UV-C in a cultivar-dependent manner; phosphorylated at Tyr-221 in cv. Subicho but not in cv. Pungchon. As to expression, expressed constitutively in roots, stems, flowers and fruits of the hot pepper (cv. Subicho).

It catalyses the reaction L-seryl-[protein] + ATP = O-phospho-L-seryl-[protein] + ADP + H(+). The catalysed reaction is L-threonyl-[protein] + ATP = O-phospho-L-threonyl-[protein] + ADP + H(+). Its activity is regulated as follows. Activated by threonine and tyrosine phosphorylation. Functionally, protein kinase involved in oxidative stress-mediated and innate immune MAP kinase signaling cascades. The sequence is that of Mitogen-activated protein kinase 2 from Capsicum annuum (Capsicum pepper).